The sequence spans 32 residues: ATP synthase 28 kDa subunit, mitochondrial (32 aa).

The protein resides in the mitochondrion. It localises to the mitochondrion inner membrane. Mitochondrial membrane ATP synthase (F(1)F(0) ATP synthase or Complex V) produces ATP from ADP in the presence of a proton gradient across the membrane which is generated by electron transport complexes of the respiratory chain. F-type ATPases consist of two structural domains, F(1) - containing the extramembraneous catalytic core and F(0) - containing the membrane proton channel, linked together by a central stalk and a peripheral stalk. During catalysis, ATP synthesis in the catalytic domain of F(1) is coupled via a rotary mechanism of the central stalk subunits to proton translocation. Part of the complex F(0) domain. This chain is ATP synthase 28 kDa subunit, mitochondrial, found in Spinacia oleracea (Spinach).